The chain runs to 654 residues: Broad substrate specificity ATP-binding cassette transporter ABCG2 (654 aa).

Residues 1 to 394 (MSSSNVEVFI…KNLLGNPQAS (394 aa)) lie on the Cytoplasmic side of the membrane. In terms of domain architecture, ABC transporter spans 37–286 (LSFHNICYRV…FESAGYHCEA (250 aa)). Residues 80-87 (GPTGGGKS), 184-190 (RGVSGGE), glutamate 211, and histidine 243 each bind ATP. An ABC transmembrane type-2 domain is found at 388–650 (LGNPQASIAQ…TIAYLKLLFL (263 aa)). The chain crosses the membrane as a helical span at residues 395-415 (IAQIIVTVILGLVIGAIYFGL). Topologically, residues 416–427 (NNDSTGIQNRAG) are extracellular. Residue asparagine 417 is glycosylated (N-linked (GlcNAc...) asparagine). Residues 428-448 (VLFFLTTNQCFSSVSAVELFV) form a helical membrane-spanning segment. Topologically, residues 449–476 (VEKKLFIHEYISGYYRVSSYFFGKLLSD) are cytoplasmic. A helical transmembrane segment spans residues 477-497 (LLPMRMLPSIIFTCIVYFMLG). The Extracellular segment spans residues 498 to 505 (LKPTADAF). A helical membrane pass occupies residues 506–526 (FIMMFTLMMVAYSASSMALAI). The Cytoplasmic portion of the chain corresponds to 527 to 534 (AAGQSVVS). A helical transmembrane segment spans residues 535-555 (VATLLMTICFVFMMIFSGLLV). N-linked (GlcNAc...) asparagine glycans are attached at residues asparagine 556, asparagine 595, and asparagine 599. Residues 556 to 629 (NLTTIASWLS…LSPWGLWKNH (74 aa)) lie on the Extracellular side of the membrane. Cysteine 591 and cysteine 607 are oxidised to a cystine. The helical transmembrane segment at 630-650 (VALACMIVIFLTIAYLKLLFL) threads the bilayer. Topologically, residues 651 to 654 (KKYS) are cytoplasmic.

This sequence belongs to the ABC transporter superfamily. ABCG family. Eye pigment precursor importer (TC 3.A.1.204) subfamily. Homodimer; disulfide-linked. The minimal functional unit is a homodimer, but the major oligomeric form in plasma membrane is a homotetramer with possibility of higher order oligomerization up to homododecamers. In terms of processing, N-glycosylated. Glycosylation-deficient ABCG2 is normally expressed and functional. Post-translationally, phosphorylated. Phosphorylation may regulate the localization to the plasma membrane, the homooligomerization and therefore, the activity of the transporter.

It localises to the cell membrane. It is found in the apical cell membrane. The protein localises to the mitochondrion membrane. It carries out the reaction ATP + H2O + xenobioticSide 1 = ADP + phosphate + xenobioticSide 2.. The enzyme catalyses urate(in) + ATP + H2O = urate(out) + ADP + phosphate + H(+). It catalyses the reaction indoxyl sulfate(in) + ATP + H2O = indoxyl sulfate(out) + ADP + phosphate + H(+). The catalysed reaction is sphing-4-enine 1-phosphate(in) + ATP + H2O = sphing-4-enine 1-phosphate(out) + ADP + phosphate + H(+). It carries out the reaction estrone 3-sulfate(in) + ATP + H2O = estrone 3-sulfate(out) + ADP + phosphate + H(+). The enzyme catalyses dehydroepiandrosterone 3-sulfate(in) + ATP + H2O = dehydroepiandrosterone 3-sulfate(out) + ADP + phosphate + H(+). It catalyses the reaction 4-methylumbelliferone sulfate(in) + ATP + H2O = 4-methylumbelliferone sulfate(out) + ADP + phosphate + H(+). The catalysed reaction is 5,7-dimethyl-2-methylamino-4-(3-pyridylmethyl)-1,3-benzothiazol-6-yl beta-D-glucuronate(in) + ATP + H2O = 5,7-dimethyl-2-methylamino-4-(3-pyridylmethyl)-1,3-benzothiazol-6-yl beta-D-glucuronate(out) + ADP + phosphate + H(+). It carries out the reaction 4-methylumbelliferone beta-D-glucuronate(in) + ATP + H2O = 4-methylumbelliferone beta-D-glucuronate(out) + ADP + phosphate + H(+). The enzyme catalyses 5,7-dimethyl-2-methylamino-4-(3-pyridylmethyl)-1,3-benzothiazol-6-yl sulfate(in) + ATP + H2O = 5,7-dimethyl-2-methylamino-4-(3-pyridylmethyl)-1,3-benzothiazol-6-yl sulfate(out) + ADP + phosphate + H(+). It catalyses the reaction 17beta-estradiol 17-O-(beta-D-glucuronate)(in) + ATP + H2O = 17beta-estradiol 17-O-(beta-D-glucuronate)(out) + ADP + phosphate + H(+). The catalysed reaction is methotrexate(in) + ATP + H2O = methotrexate(out) + ADP + phosphate + H(+). It carries out the reaction riboflavin(in) + ATP + H2O = riboflavin(out) + ADP + phosphate + H(+). The enzyme catalyses pheophorbide a(in) + ATP + H2O = pheophorbide a(out) + ADP + phosphate + H(+). It catalyses the reaction itaconate(in) + ATP + H2O = itaconate(out) + ADP + phosphate + H(+). Broad substrate specificity ATP-dependent transporter of the ATP-binding cassette (ABC) family that actively extrudes a wide variety of physiological compounds, dietary toxins and xenobiotics from cells. Involved in porphyrin homeostasis, mediating the export of protoporphyrin IX (PPIX) from both mitochondria to cytosol and cytosol to extracellular space, it also functions in the cellular export of heme. Also mediates the efflux of sphingosine-1-P from cells. Acts as a urate exporter functioning in both renal and extrarenal urate excretion. In kidney, it also functions as a physiological exporter of the uremic toxin indoxyl sulfate. Also involved in the excretion of steroids like estrone 3-sulfate/E1S, 3beta-sulfooxy-androst-5-en-17-one/DHEAS, and other sulfate conjugates. Mediates the secretion of the riboflavin and biotin vitamins into milk. Extrudes pheophorbide a, a phototoxic porphyrin catabolite of chlorophyll, reducing its bioavailability. Plays an important role in the exclusion of xenobiotics from the brain. It confers to cells a resistance to multiple drugs and other xenobiotics including mitoxantrone, pheophorbide, camptothecin, methotrexate, azidothymidine, and the anthracyclines daunorubicin and doxorubicin, through the control of their efflux. In placenta, it limits the penetration of drugs from the maternal plasma into the fetus. May play a role in early stem cell self-renewal by blocking differentiation. In inflammatory macrophages, exports itaconate from the cytosol to the extracellular compartment and limits the activation of TFEB-dependent lysosome biogenesis involved in antibacterial innate immune response. The chain is Broad substrate specificity ATP-binding cassette transporter ABCG2 (ABCG2) from Macaca mulatta (Rhesus macaque).